The following is a 732-amino-acid chain: Prolyl tripeptidyl peptidase (732 aa).

The N-terminal stretch at 1–24 (MKKTIFQQLFLSVCALTVALPCSA) is a signal peptide. Active-site charge relay system residues include serine 603, aspartate 678, and histidine 710.

The protein belongs to the peptidase S9B family. In terms of processing, the N-terminus is blocked.

It carries out the reaction Hydrolysis of Xaa-Xaa-Pro-|-Yaa- releasing the N-terminal tripeptide of a peptide with Pro as the third residue (position P1) and where Yaa is not proline.. Strongly inhibited by diisopropyl fluorophosphate and Pefabloc. Weakly inhibited by 3,4-dichloroisocumarin. Not inhibited by phenylmethylsulfonyl fluoride, leupeptin, antipain or prolinal. Activated by iodoacetamide. In terms of biological role, serine proteinase. Releases tripeptides from the free amino terminus of proteins. Has a requirement for Pro in the P1 position, but is inactivated by Pro in the P1' position. In Porphyromonas gingivalis (strain ATCC BAA-308 / W83), this protein is Prolyl tripeptidyl peptidase.